Here is a 222-residue protein sequence, read N- to C-terminus: Triosephosphate isomerase (222 aa).

Substrate is bound at residue 9–11; sequence NYK. The Electrophile role is filled by histidine 93. Catalysis depends on glutamate 141, which acts as the Proton acceptor. Residues isoleucine 146, glycine 181, and 202 to 203 each bind substrate; that span reads AS.

This sequence belongs to the triosephosphate isomerase family. Homotetramer; dimer of dimers.

Its subcellular location is the cytoplasm. It catalyses the reaction D-glyceraldehyde 3-phosphate = dihydroxyacetone phosphate. It functions in the pathway carbohydrate biosynthesis; gluconeogenesis. It participates in carbohydrate degradation; glycolysis; D-glyceraldehyde 3-phosphate from glycerone phosphate: step 1/1. Functionally, involved in the gluconeogenesis. Catalyzes stereospecifically the conversion of dihydroxyacetone phosphate (DHAP) to D-glyceraldehyde-3-phosphate (G3P). The protein is Triosephosphate isomerase of Methanobrevibacter smithii (strain ATCC 35061 / DSM 861 / OCM 144 / PS).